Consider the following 89-residue polypeptide: Cell division topological specificity factor (89 aa).

The protein belongs to the MinE family.

Prevents the cell division inhibition by proteins MinC and MinD at internal division sites while permitting inhibition at polar sites. This ensures cell division at the proper site by restricting the formation of a division septum at the midpoint of the long axis of the cell. The sequence is that of Cell division topological specificity factor from Klebsiella pneumoniae (strain 342).